A 160-amino-acid polypeptide reads, in one-letter code: Transcription elongation factor GreA (160 aa).

A coiled-coil region spans residues 1-71; the sequence is MAEKTYPMTL…GQISTLETKI (71 aa).

It belongs to the GreA/GreB family.

Its function is as follows. Necessary for efficient RNA polymerase transcription elongation past template-encoded arresting sites. The arresting sites in DNA have the property of trapping a certain fraction of elongating RNA polymerases that pass through, resulting in locked ternary complexes. Cleavage of the nascent transcript by cleavage factors such as GreA or GreB allows the resumption of elongation from the new 3'terminus. GreA releases sequences of 2 to 3 nucleotides. This Streptococcus pyogenes serotype M3 (strain ATCC BAA-595 / MGAS315) protein is Transcription elongation factor GreA.